The sequence spans 85 residues: MVKIRLTRGGAKKRPFYHIIVTDVRSARDGRNIERLGYYNPVAQGAEPRVVLDTARVDHWVGNGAQLTDKVRNLYREAKSQAAAA.

Belongs to the bacterial ribosomal protein bS16 family.

The chain is Small ribosomal subunit protein bS16 from Xanthomonas oryzae pv. oryzae (strain PXO99A).